The chain runs to 444 residues: Tryptophan 5-hydroxylase 1 (444 aa).

Residues Thr-19 to Gln-94 form the ACT domain. Ser-58 is subject to Phosphoserine; by PKA. Residues Tyr-235, Arg-257, and Thr-265 each coordinate L-tryptophan. Residues His-272, His-277, and Glu-317 each contribute to the Fe cation site. The L-tryptophan site is built by Ser-336 and Ile-366.

Belongs to the biopterin-dependent aromatic amino acid hydroxylase family. In terms of assembly, homotetramer. Interacts with DNAJC12. Fe(2+) is required as a cofactor. Ubiquitinated, leading to its degradation by the proteasome. Ubiquitinated is triggered by phosphorylation. Post-translationally, phosphorylated; triggering degradation by the proteasome.

The enzyme catalyses (6R)-L-erythro-5,6,7,8-tetrahydrobiopterin + L-tryptophan + O2 = 5-hydroxy-L-tryptophan + (4aS,6R)-4a-hydroxy-L-erythro-5,6,7,8-tetrahydrobiopterin. Its pathway is aromatic compound metabolism; serotonin biosynthesis; serotonin from L-tryptophan: step 1/2. Functionally, oxidizes L-tryptophan to 5-hydroxy-l-tryptophan in the rate-determining step of serotonin biosynthesis. This chain is Tryptophan 5-hydroxylase 1 (Tph1), found in Rattus norvegicus (Rat).